Here is a 335-residue protein sequence, read N- to C-terminus: MVREKIRVSTQTLQWKCVESRTDSKCLHYGRFILSPLMKGQADTIGIAMRRALLGEIEGTCITRAKSEKIPHEYSTILGIQESVHEILMNLKEIVLRSNLYGTCEASICVRGPRGVTAQDIILPPYVEIVDNTQHIASLTEPIDLCIGLQLERNRGYHIKAPNNFQDGSFPIDALFMPVRNVNHSIHSYGNGNEKQEILFLEIWTNGSLTPKEALYEASRNLIDLLIPFLHAEENVNLEDNQHKVSLPLFTFHNRLAEIRKNKKKIALKFIFIDQLELPPRIYNCLKKSNIHTLLDLLNNSQEDLIKMKHFRIEDVKQIFGTLEKHFVIDLKNKR.

Residues 1–233 (MVREKIRVST…DLLIPFLHAE (233 aa)) form an alpha N-terminal domain (alpha-NTD) region. The alpha C-terminal domain (alpha-CTD) stretch occupies residues 263–335 (KKKIALKFIF…HFVIDLKNKR (73 aa)).

This sequence belongs to the RNA polymerase alpha chain family. In plastids the minimal PEP RNA polymerase catalytic core is composed of four subunits: alpha, beta, beta', and beta''. When a (nuclear-encoded) sigma factor is associated with the core the holoenzyme is formed, which can initiate transcription.

It localises to the plastid. It is found in the chloroplast. The catalysed reaction is RNA(n) + a ribonucleoside 5'-triphosphate = RNA(n+1) + diphosphate. Its function is as follows. DNA-dependent RNA polymerase catalyzes the transcription of DNA into RNA using the four ribonucleoside triphosphates as substrates. This is DNA-directed RNA polymerase subunit alpha from Spinacia oleracea (Spinach).